An 800-amino-acid chain; its full sequence is DNA topoisomerase 4 subunit A (800 aa).

Residues 31-495 (LPDVRDGLKP…EIEEIKIDKE (465 aa)) enclose the Topo IIA-type catalytic domain. Residue tyrosine 119 is the O-(5'-phospho-DNA)-tyrosine intermediate of the active site.

This sequence belongs to the type II topoisomerase GyrA/ParC subunit family. ParC type 2 subfamily. In terms of assembly, heterotetramer composed of ParC and ParE.

It is found in the cell membrane. It catalyses the reaction ATP-dependent breakage, passage and rejoining of double-stranded DNA.. Functionally, topoisomerase IV is essential for chromosome segregation. It relaxes supercoiled DNA. Performs the decatenation events required during the replication of a circular DNA molecule. The sequence is that of DNA topoisomerase 4 subunit A from Staphylococcus aureus (strain MW2).